A 105-amino-acid polypeptide reads, in one-letter code: Large ribosomal subunit protein uL24 (105 aa).

Belongs to the universal ribosomal protein uL24 family. In terms of assembly, part of the 50S ribosomal subunit.

Its function is as follows. One of two assembly initiator proteins, it binds directly to the 5'-end of the 23S rRNA, where it nucleates assembly of the 50S subunit. Functionally, one of the proteins that surrounds the polypeptide exit tunnel on the outside of the subunit. The chain is Large ribosomal subunit protein uL24 from Dictyoglomus turgidum (strain DSM 6724 / Z-1310).